Reading from the N-terminus, the 122-residue chain is Large ribosomal subunit protein bL12 (122 aa).

The protein belongs to the bacterial ribosomal protein bL12 family. Homodimer. Part of the ribosomal stalk of the 50S ribosomal subunit. Forms a multimeric L10(L12)X complex, where L10 forms an elongated spine to which 2 to 4 L12 dimers bind in a sequential fashion. Binds GTP-bound translation factors.

Forms part of the ribosomal stalk which helps the ribosome interact with GTP-bound translation factors. Is thus essential for accurate translation. The chain is Large ribosomal subunit protein bL12 from Xanthomonas oryzae pv. oryzae (strain MAFF 311018).